A 166-amino-acid chain; its full sequence is MANTDAQNDGLREKLVAINRVAKVVKGGRQFGFTALAVVGDGDGQVGFGYGKAREVPAAIQKAMEKARANMKRVHLDGGTLQYAVTANHGSSKVYMQPASAGTGIIAGGAMRAVFEVVGVQDVLAKAIGSRNPINVVRATIKGLTDVDSPDAVAARRGKKVEDIVG.

In terms of domain architecture, S5 DRBM spans 11–74 (LREKLVAINR…EKARANMKRV (64 aa)).

This sequence belongs to the universal ribosomal protein uS5 family. As to quaternary structure, part of the 30S ribosomal subunit. Contacts proteins S4 and S8.

Functionally, with S4 and S12 plays an important role in translational accuracy. In terms of biological role, located at the back of the 30S subunit body where it stabilizes the conformation of the head with respect to the body. This is Small ribosomal subunit protein uS5 from Alkalilimnicola ehrlichii (strain ATCC BAA-1101 / DSM 17681 / MLHE-1).